The sequence spans 210 residues: Redox-sensing transcriptional repressor Rex (210 aa).

The segment at residues 16-55 (IYSRFLKRLDKKGITTVSSGDIAEGVGVSPAQVRKDLAYF) is a DNA-binding region (H-T-H motif). Residue 90 to 95 (GAGNLG) participates in NAD(+) binding.

It belongs to the transcriptional regulatory Rex family. In terms of assembly, homodimer.

Its subcellular location is the cytoplasm. Functionally, modulates transcription in response to changes in cellular NADH/NAD(+) redox state. In Desulforamulus reducens (strain ATCC BAA-1160 / DSM 100696 / MI-1) (Desulfotomaculum reducens), this protein is Redox-sensing transcriptional repressor Rex.